The primary structure comprises 99 residues: Protein adenylyltransferase MntA (99 aa).

Residues 33-47 carry the GSX(10)DXD motif motif; the sequence is GSYVRGEAKEDSDVD. Active-site residues include Asp-45 and Asp-47. Residues Asp-45, Asp-47, and Asp-77 each coordinate Mg(2+).

This sequence belongs to the MntA antitoxin family. It depends on Mg(2+) as a cofactor.

It carries out the reaction L-tyrosyl-[protein] + ATP = O-(5'-adenylyl)-L-tyrosyl-[protein] + diphosphate. The enzyme catalyses O-(5'-adenylyl)-L-tyrosyl-[protein] + ATP = O-[5'-(adenylyl-(5'-&gt;3')-adenylyl)]-L-tyrosyl-[protein] + diphosphate. Its function is as follows. Antitoxin component of a type VII toxin-antitoxin (TA) system. Overexpression in E.coli neutralizes the toxic effect of cognate toxin HepT. Neutralization is mostly due to AMPylation of the toxin by this enzyme. This Thermococcus cleftensis (strain DSM 27260 / KACC 17922 / CL1) protein is Protein adenylyltransferase MntA.